The following is a 311-amino-acid chain: MVSVSEIRKAQRAEGPATILAIGTANPANKVEQATYPDFYFKITNSEHKVELKEKFQRMCDKSMIKSRYMYLTEEILKENPSVCEYMAPSLDARQDMVVVEVPRLGKEAAVKAIKEWGQPKSKITHLIFCTTSGVDMPGADYQLTKLLGLRPYVKRYMMYQQGCFAGGTVLRLAKDLAENNKGARVLVVCSEVTAVTFRGPSDTHLDSLVGQALFGDGAAALIVGSDPVPEIEKPIFEMVWTAQTIAPDSEGAIDGHLREAGLTFHLLKDVPGIVSKNIDKALVEAFQPLGISDYNSIFWIAHPGGPAILD.

Cys-164 is a catalytic residue.

The protein belongs to the thiolase-like superfamily. Chalcone/stilbene synthases family.

It carries out the reaction (E)-4-coumaroyl-CoA + 3 malonyl-CoA + 3 H(+) = 2',4,4',6'-tetrahydroxychalcone + 3 CO2 + 4 CoA. It participates in secondary metabolite biosynthesis; flavonoid biosynthesis. The primary product of this enzyme is 4,2',4',6'-tetrahydroxychalcone (also termed naringenin-chalcone or chalcone) which can under specific conditions spontaneously isomerize into naringenin. The sequence is that of Chalcone synthase 4 (CHS4) from Trifolium subterraneum (Subterranean clover).